We begin with the raw amino-acid sequence, 92 residues long: MKFALALCAAVLLVVLVQAEEKCTPGQVKQQDCNTCTCTPTGVWGCTRKGCQPAKREISCEPGKTFKDKCNTCRCGADGKSAACTLKACPNQ.

The N-terminal stretch at 1–19 is a signal peptide; it reads MKFALALCAAVLLVVLVQA. 2 consecutive Pacifastin domains span residues 20–54 and 57–92; these read EEKC…CQPA and EISC…CPNQ. Cystine bridges form between cysteine 23/cysteine 38, cysteine 33/cysteine 51, cysteine 36/cysteine 46, cysteine 60/cysteine 75, cysteine 70/cysteine 89, and cysteine 73/cysteine 84. Threonine 65 carries O-linked (Fuc) threonine glycosylation.

The protein belongs to the protease inhibitor I19 family. In terms of tissue distribution, brain and fat body.

It localises to the secreted. Its function is as follows. Both LCMI I and II are inhibitors of chymotrypsin and elastase (in vitro). They both inhibit the prophenol oxidase activation cascade. This is Protease inhibitors from Locusta migratoria (Migratory locust).